We begin with the raw amino-acid sequence, 368 residues long: Membrane glycoprotein UL18 (368 aa).

The signal sequence occupies residues 1–19 (MMTMWCLTLFVLWMLRVVG). Residues 326–346 (ISSVLLALLLCALLFAFLHYF) traverse the membrane as a helical segment.

As to quaternary structure, interacts with host LILRB1.

The protein localises to the host membrane. Plays a role in the protection against host NK cell cytotoxicity by interacting with and modulating the activity of the host inhibitory leukocyte Ig-like receptor 1/LILRB1, which is expressed on monocytes, dendritic cells, as well as subsets of T and NK cells. UL18 exerts an inhibitory effect on LIR-1+ NK cells, while it stimulates LIR-1- NK cell. This is Membrane glycoprotein UL18 (UL18) from Homo sapiens (Human).